Consider the following 173-residue polypeptide: Catabolic 3-dehydroquinase (173 aa).

Tyrosine 26 serves as the catalytic Proton acceptor. Positions 102, 108, and 115 each coordinate substrate. Histidine 128 serves as the catalytic Proton donor. Substrate contacts are provided by residues 129 to 130 (VS) and arginine 139.

This sequence belongs to the type-II 3-dehydroquinase family. As to quaternary structure, homododecamer. Adopts a ring-like structure, composed of an arrangement of two hexameric rings stacked on top of one another.

It catalyses the reaction 3-dehydroquinate = 3-dehydroshikimate + H2O. Its pathway is aromatic compound metabolism; 3,4-dihydroxybenzoate biosynthesis; 3,4-dihydroxybenzoate from 3-dehydroquinate: step 1/2. Its function is as follows. 3-dehydroquinate dehydratase; part of the qa gene cluster that mediates the catabolism of quinic acid (QA) and as such, allows the use of QA as a sole carbon source. Catalyzes the second reaction in the inducible quinic acid catabolic pathway by converting 3-dehydroquinate into 3-dehydroshikimate. The qa cluster encodes 3 inducible enymes (qa-2, qa-3 and qa-4) catalyzing the first three reactions in the catabolism of quinic acid to protocatechuic acid (also known as 3,4-Dihydroxybenzoic acid). The chain is Catabolic 3-dehydroquinase from Neurospora crassa (strain ATCC 24698 / 74-OR23-1A / CBS 708.71 / DSM 1257 / FGSC 987).